Consider the following 686-residue polypeptide: Probable metal-nicotianamine transporter YSL4 (686 aa).

The next 14 helical transmembrane spans lie at 27-47 (WLVT…FCFV), 53-73 (MMTG…FFLL), 96-116 (MFLI…GFAT), 151-171 (FFLI…IMII), 203-223 (VMTI…QWFY), 264-284 (IVNF…YPYL), 308-328 (VFIS…ILVT), 373-393 (IPMF…MVAM), 405-425 (VGVL…ATGL), 441-461 (IFAA…VSGI), 488-508 (AMIA…PCIF), 554-574 (CVEL…LVLV), 596-616 (FFAG…LLLW), and 629-649 (AAVA…SALL).

It belongs to the YSL (TC 2.A.67.2) family.

The protein resides in the membrane. May be involved in the transport of nicotianamine-chelated metals. This Oryza sativa subsp. japonica (Rice) protein is Probable metal-nicotianamine transporter YSL4 (YSL4).